A 506-amino-acid chain; its full sequence is Subtilisin-like serine protease Cur l 4.0101 (506 aa).

The signal sequence occupies residues 1-15 (MKYSLIAALPALAAA). Residues 16–135 (SPTFSTETIH…IERDSEVRIL (120 aa)) constitute a propeptide, removed in mature form. Residues 43–134 (SYMVVFKKHV…YIERDSEVRI (92 aa)) form the Inhibitor I9 domain. The segment at 59-79 (HDWVQSVHSKNTQERMELRKR) is disordered. A compositionally biased stretch (basic and acidic residues) spans 69 to 79 (NTQERMELRKR). The region spanning 147–453 (PWGLARISHR…GGSSNYTDII (307 aa)) is the Peptidase S8 domain. Active-site charge relay system residues include aspartate 183 and histidine 215. N-linked (GlcNAc...) asparagine glycosylation is found at asparagine 245 and asparagine 285. Serine 381 acts as the Charge relay system in catalysis. The N-linked (GlcNAc...) asparagine glycan is linked to asparagine 448. Residues 459–506 (TVKKAASKEEEKESEFRITIPSLSELEDDFEKAKESAGRKAHHVGGKL) constitute a propeptide, removed in mature form.

Belongs to the peptidase S8 family.

Serine protease. The protein is Subtilisin-like serine protease Cur l 4.0101 of Cochliobolus lunatus (Filamentous fungus).